The primary structure comprises 692 residues: Elongation factor G (692 aa).

In terms of domain architecture, tr-type G spans 8 to 282 (ERTRNIGIMA…AIVDYLPAPT (275 aa)). GTP is bound by residues 17–24 (AHIDAGKT), 81–85 (DTPGH), and 135–138 (NKMD).

The protein belongs to the TRAFAC class translation factor GTPase superfamily. Classic translation factor GTPase family. EF-G/EF-2 subfamily.

Its subcellular location is the cytoplasm. Its function is as follows. Catalyzes the GTP-dependent ribosomal translocation step during translation elongation. During this step, the ribosome changes from the pre-translocational (PRE) to the post-translocational (POST) state as the newly formed A-site-bound peptidyl-tRNA and P-site-bound deacylated tRNA move to the P and E sites, respectively. Catalyzes the coordinated movement of the two tRNA molecules, the mRNA and conformational changes in the ribosome. The protein is Elongation factor G of Desulforamulus reducens (strain ATCC BAA-1160 / DSM 100696 / MI-1) (Desulfotomaculum reducens).